Here is a 452-residue protein sequence, read N- to C-terminus: MQSEMAIDTVATAEKSPLELLQQTKASVEAIIAKMLSIKQQGTPKSENRELLTQMFLNFINLRQANRSILIEEEKVRTETEIAKSPVDFTTLELHNLMYEKSHYLKANKASRDFKSRYPNIDLISEQDFFSDAPEAIKSQTLSNDSSHDLMLKRLNFELHQRKELCKLRVRLEQQKKSLLESNAERNKFLSSLPVHLKSLKKASLPVQSQLSLQNQKKLKYHNLAELLPPPLYVIYSQFMALKEAFEENIDVEVSGSLKDAQTYARQQAEQNSESLRLEVGVDEERQRKRLKKVGSDEGGVYQVHPLKVVLHVYDDEITDPKSHELVMLKFEYLLKLNVVCVGIEESEDGLEKNILCNLFPDDSGLEPPHQSAKLILGNDHVFDKSRTSRPYKWAQHLAGIETLPEMSPFFTDKDIQYSDTAKGYASASDHRNVQTVLQRIRSQKKTKLTLV.

It belongs to the THOC5 family. Component of the THO complex, which is composed of THO1, THO2, THO3, THO5, THO6 and THO7.

The protein resides in the nucleus. Acts as a component of the THO subcomplex of the TREX complex which is thought to couple mRNA transcription, processing and nuclear export. The polypeptide is THO complex subunit 5A (THO5A) (Arabidopsis thaliana (Mouse-ear cress)).